Consider the following 361-residue polypeptide: Putative geranylgeranyl pyrophosphate synthase 8, chloroplastic (361 aa).

Residues 1–39 (MATTVHLSSFSLFIQSRGRRDNSISSVKSLKKRTGLSPS) constitute a chloroplast transit peptide. The segment at 24-58 (ISSVKSLKKRTGLSPSSALTSQGGRDMIPPQGKSN) is disordered. The span at 36-46 (LSPSSALTSQG) shows a compositional bias: polar residues. Residues Lys107, Arg110, and His139 each coordinate isopentenyl diphosphate. 2 residues coordinate Mg(2+): Asp146 and Asp152. Arg157 contributes to the dimethylallyl diphosphate binding site. Arg158 contacts isopentenyl diphosphate. 5 residues coordinate dimethylallyl diphosphate: Lys246, Thr247, Gln284, Lys301, and Lys311.

It belongs to the FPP/GGPP synthase family. Monomer. The cofactor is Mg(2+).

It is found in the plastid. The protein resides in the chloroplast. It carries out the reaction isopentenyl diphosphate + dimethylallyl diphosphate = (2E)-geranyl diphosphate + diphosphate. The catalysed reaction is isopentenyl diphosphate + (2E)-geranyl diphosphate = (2E,6E)-farnesyl diphosphate + diphosphate. The enzyme catalyses isopentenyl diphosphate + (2E,6E)-farnesyl diphosphate = (2E,6E,10E)-geranylgeranyl diphosphate + diphosphate. The protein operates within isoprenoid biosynthesis; farnesyl diphosphate biosynthesis; farnesyl diphosphate from geranyl diphosphate and isopentenyl diphosphate: step 1/1. It functions in the pathway isoprenoid biosynthesis; geranyl diphosphate biosynthesis; geranyl diphosphate from dimethylallyl diphosphate and isopentenyl diphosphate: step 1/1. Its pathway is isoprenoid biosynthesis; geranylgeranyl diphosphate biosynthesis; geranylgeranyl diphosphate from farnesyl diphosphate and isopentenyl diphosphate: step 1/1. In terms of biological role, catalyzes the trans-addition of the three molecules of IPP onto DMAPP to form geranylgeranyl pyrophosphate. The chain is Putative geranylgeranyl pyrophosphate synthase 8, chloroplastic from Arabidopsis thaliana (Mouse-ear cress).